The following is a 180-amino-acid chain: UPF0743 protein C215.06c (180 aa).

C2HC LYAR-type zinc fingers lie at residues M1–H26 and G27–M51. Zn(2+) is bound by residues C6, C9, H21, C25, C32, C35, H47, and C50. The interval L61–Q125 is disordered. The span at N77 to A95 shows a compositional bias: polar residues. At S85 the chain carries Phosphoserine. Residues H100–N111 show a composition bias toward basic and acidic residues.

Belongs to the UPF0743 family.

The protein localises to the nucleus. This chain is UPF0743 protein C215.06c, found in Schizosaccharomyces pombe (strain 972 / ATCC 24843) (Fission yeast).